The following is a 152-amino-acid chain: Small ribosomal subunit protein uS8m (152 aa).

It belongs to the universal ribosomal protein uS8 family.

The protein localises to the mitochondrion. This Marchantia polymorpha (Common liverwort) protein is Small ribosomal subunit protein uS8m (RPS8).